A 341-amino-acid chain; its full sequence is Elongation factor Ts (341 aa).

Residues 80–83 (TDFV) form an involved in Mg(2+) ion dislocation from EF-Tu region.

Belongs to the EF-Ts family.

It is found in the cytoplasm. Associates with the EF-Tu.GDP complex and induces the exchange of GDP to GTP. It remains bound to the aminoacyl-tRNA.EF-Tu.GTP complex up to the GTP hydrolysis stage on the ribosome. The sequence is that of Elongation factor Ts from Lactobacillus gasseri (strain ATCC 33323 / DSM 20243 / BCRC 14619 / CIP 102991 / JCM 1131 / KCTC 3163 / NCIMB 11718 / NCTC 13722 / AM63).